The sequence spans 817 residues: Leucine--tRNA ligase (817 aa).

The 'HIGH' region signature appears at 42–52 (PYPSGRLHMGH). Residues 576 to 580 (KMSKS) carry the 'KMSKS' region motif. Lys-579 contacts ATP.

It belongs to the class-I aminoacyl-tRNA synthetase family.

It localises to the cytoplasm. The enzyme catalyses tRNA(Leu) + L-leucine + ATP = L-leucyl-tRNA(Leu) + AMP + diphosphate. The polypeptide is Leucine--tRNA ligase (Thioalkalivibrio sulfidiphilus (strain HL-EbGR7)).